The chain runs to 650 residues: DNA mismatch repair protein MutL (650 aa).

The interval 374 to 420 (SSLPDTQRSQRQPEKAASGQRSSVDAGLSQGSSAHRASQTGLGQSGN) is disordered. Residues 392–420 (GQRSSVDAGLSQGSSAHRASQTGLGQSGN) show a composition bias toward polar residues.

This sequence belongs to the DNA mismatch repair MutL/HexB family.

Functionally, this protein is involved in the repair of mismatches in DNA. It is required for dam-dependent methyl-directed DNA mismatch repair. May act as a 'molecular matchmaker', a protein that promotes the formation of a stable complex between two or more DNA-binding proteins in an ATP-dependent manner without itself being part of a final effector complex. This is DNA mismatch repair protein MutL from Shewanella amazonensis (strain ATCC BAA-1098 / SB2B).